The following is a 553-amino-acid chain: MAKQIVHGEESRQSILRGVNVLADAVKVTLGPKGRNVVIDKKFGSPLITKDGVTVAKEIELKDTLENMGAQMVKEVASKTSDIAGDGTTTATVLAQAIYREGVKNVAAGSNPMALKRGIDKAVTAVCGYNDAEGNRIPGALDKFSKPVTGEMIAQVGTISANNDETIGKIIAEAMKKVGKDGVITVEESKTMETQLEVVEGMQFDRGYLSPYFVTDPERMEAVLENPYILIHEKKVSSMKDLLPLLEQIAKGGRPLVIIAEDVEGEALATLVVNKLRGTLNVAAVKAPGFGDRRKAMLQDIAILTGGKAITEDLGIKLENVHMDDLGSAKKVTIDKDNTTIVEGKGKSSDIEGRVKEIRSQVEKTTSDYDREKLQERLAKLVGGVAVIKVGAATETEMKEKKARVEDAMHATRAAVEEGIVPGGGVALIRCVEAVDALKLTGDEGIGANIIKRALEEPLRQIVGNAGEEGAIVVGKIRDHKDPHYGYNAQTSEYVDLVKAGVIDPTKVTRTALQNAGSIAGLMLTTEALISEIPEEKKSEPAGGHGGGMGGMY.

Residues 29-32 (TLGP), Lys-50, 86-90 (DGTTT), Gly-424, and Asp-504 each bind ATP.

Belongs to the chaperonin (HSP60) family. Forms a cylinder of 14 subunits composed of two heptameric rings stacked back-to-back. Interacts with the co-chaperonin GroES.

Its subcellular location is the cytoplasm. It catalyses the reaction ATP + H2O + a folded polypeptide = ADP + phosphate + an unfolded polypeptide.. In terms of biological role, together with its co-chaperonin GroES, plays an essential role in assisting protein folding. The GroEL-GroES system forms a nano-cage that allows encapsulation of the non-native substrate proteins and provides a physical environment optimized to promote and accelerate protein folding. The protein is Chaperonin GroEL of Koribacter versatilis (strain Ellin345).